We begin with the raw amino-acid sequence, 447 residues long: UPF0328 protein ECU10_1870 (447 aa).

Composition is skewed to basic and acidic residues over residues 1 to 10 and 64 to 84; these read MPSDHPDFRS and HTEGCHTHEANPEPNTKHTET. Disordered stretches follow at residues 1-103 and 147-173; these read MPSD…TATP and VKSQSVSHRAPITYQPPRPTTTSNPRI. Residues 92–103 are compositionally biased toward pro residues; that stretch reads CPPPHPGPTATP.

Belongs to the UPF0328 family.

The protein is UPF0328 protein ECU10_1870 of Encephalitozoon cuniculi (strain GB-M1) (Microsporidian parasite).